Reading from the N-terminus, the 417-residue chain is Methyltransferase/ribosomally synthesized cyclic peptide lentinulin A precursor ledMA (417 aa).

The segment at 1–251 (METPTLNKSG…GVSTFYIPPK (251 aa)) is methyltransferase domain. Residues Arg72, Tyr76, and Tyr98 contribute to the active site. S-adenosyl-L-methionine-binding residues include Tyr98, His100, Val103, Ala130, Gln172, Ala213, Ser244, and Thr245. Positions 252–378 (ERKEINVDII…WAFRCAMKEM (127 aa)) are clasp domain. Residues 379-399 (PISLLDNAKQSMEEASEQGFP) form a precursor leader region. Ile401 is subject to N-methylisoleucine. 2 positions are modified to N-methylvaline: Val403 and Val404. Gly405 is subject to N-methylglycine. 2 positions are modified to N-methylvaline: Val406 and Val407. An N-methylglycine modification is found at Gly408. Val410 carries the post-translational modification N-methylvaline. Gly411 carries the N-methylglycine modification. Val413 carries the post-translational modification N-methylvaline.

It in the N-terminal section; belongs to the precorrin methyltransferase family. Homodimer. In terms of processing, ledMA automethylates at Ile-401, Val-403, Val-404, Gly-405, Val-406, Val-407, Gly-408, Val-410, Gly-411 and Val-413 before being processed by the prolyloligopeptidase ledP which likely forms a peptidyl ester upon removal of the follower propeptide, which then undergoes macrocyclization with the N-terminus of the modified core peptide. Peptide backbone alpha-N-methylations change the physicochemical properties of amide bonds to provide structural constraints and other favorable characteristics including biological membrane permeability to peptides.

It participates in mycotoxin biosynthesis. Its function is as follows. Fusion protein of the methyltransferase ledM and the lentinulin A core peptide; part of the gene cluster that mediates the biosynthesis of lentinulin A, a highly methylated cyclic dodecapeptide with nematodicidal activity. Lentinulin A derives from the C-terminus of the ledMA protein, and it is the ledMA protein that methylates its own C-terminus using S-adenosyl methionine (SAM). The C-terminus is subsequently cleaved off and macrocyclized by the prolyloligopeptidase ledP to give the final product. The protein is Methyltransferase/ribosomally synthesized cyclic peptide lentinulin A precursor ledMA of Lentinula edodes (Shiitake mushroom).